The chain runs to 586 residues: Pyruvate kinase (586 aa).

Arginine 32 provides a ligand contact to substrate. Asparagine 34, serine 36, aspartate 66, and threonine 67 together coordinate K(+). Asparagine 34 to histidine 37 lines the ATP pocket. ATP is bound by residues arginine 73 and lysine 156. Glutamate 222 provides a ligand contact to Mg(2+). Residues glycine 245, aspartate 246, and threonine 278 each contribute to the substrate site. Aspartate 246 is a binding site for Mg(2+).

Belongs to the pyruvate kinase family. The protein in the C-terminal section; belongs to the PEP-utilizing enzyme family. It depends on Mg(2+) as a cofactor. Requires K(+) as cofactor.

The catalysed reaction is pyruvate + ATP = phosphoenolpyruvate + ADP + H(+). Its pathway is carbohydrate degradation; glycolysis; pyruvate from D-glyceraldehyde 3-phosphate: step 5/5. The polypeptide is Pyruvate kinase (pyk) (Staphylococcus haemolyticus (strain JCSC1435)).